The sequence spans 392 residues: Phosphoglycerate kinase (392 aa).

Substrate contacts are provided by residues 21-23 (DFN), R36, 59-62 (HLGR), R117, and R150. ATP is bound by residues K200, G288, E319, and 345–348 (GGDS).

This sequence belongs to the phosphoglycerate kinase family. In terms of assembly, monomer.

It localises to the cytoplasm. The enzyme catalyses (2R)-3-phosphoglycerate + ATP = (2R)-3-phospho-glyceroyl phosphate + ADP. The protein operates within carbohydrate degradation; glycolysis; pyruvate from D-glyceraldehyde 3-phosphate: step 2/5. In Rubrobacter xylanophilus (strain DSM 9941 / JCM 11954 / NBRC 16129 / PRD-1), this protein is Phosphoglycerate kinase.